The following is a 342-amino-acid chain: Succinylglutamate desuccinylase (342 aa).

The Zn(2+) site is built by His-64, Glu-67, and His-159. Glu-222 is a catalytic residue.

Belongs to the AspA/AstE family. Succinylglutamate desuccinylase subfamily. The cofactor is Zn(2+).

It catalyses the reaction N-succinyl-L-glutamate + H2O = L-glutamate + succinate. It functions in the pathway amino-acid degradation; L-arginine degradation via AST pathway; L-glutamate and succinate from L-arginine: step 5/5. Transforms N(2)-succinylglutamate into succinate and glutamate. This Burkholderia orbicola (strain MC0-3) protein is Succinylglutamate desuccinylase.